We begin with the raw amino-acid sequence, 539 residues long: 4-hydroxybenzoate--CoA/benzoate--CoA ligase (539 aa).

It belongs to the ATP-dependent AMP-binding enzyme family. Benzoate-CoA ligase subfamily. As to quaternary structure, homodimer. In terms of processing, the N-terminus is blocked.

It catalyses the reaction 4-hydroxybenzoate + ATP + CoA = 4-hydroxybenzoyl-CoA + AMP + diphosphate. It carries out the reaction benzoate + ATP + CoA = benzoyl-CoA + AMP + diphosphate. In terms of biological role, catalyzes the ligation of 4-hydroxybenzoate, benzoate or cyclohex-1,4-dienecarboxylate and CoA at the expense of ATP. The enzyme shows low activity towards cyclo-2,5-dienecarboxylate, 4-fluorobenzoate, 4-chlorobenzoate and 2-methoxybenzoate. This chain is 4-hydroxybenzoate--CoA/benzoate--CoA ligase (hbaA), found in Rhodopseudomonas palustris (strain ATCC BAA-98 / CGA009).